A 603-amino-acid chain; its full sequence is Multicopper oxidase MCE (603 aa).

An N-terminal signal peptide occupies residues 1-21 (MNTFICSALICLSWLPGFIQA). One can recognise a Plastocyanin-like 1 domain in the interval 30–144 (ITYAKGAPDG…YGALWIRPKE (115 aa)). Asn-75 carries an N-linked (GlcNAc...) asparagine glycan. Positions 79, 81, 123, and 125 each coordinate Cu cation. Residues Asn-155, Asn-180, Asn-235, Asn-256, Asn-272, Asn-275, Asn-388, Asn-394, Asn-413, and Asn-455 are each glycosylated (N-linked (GlcNAc...) asparagine). A Plastocyanin-like 2 domain is found at 173-353 (LIVSDWSNFT…TPGDYTIRLP (181 aa)). The 132-residue stretch at 450-581 (LLYNPNSTAA…GGMAGVIMDG (132 aa)) folds into the Plastocyanin-like 3 domain. His-495 contacts Cu cation. Asn-512 and Asn-595 each carry an N-linked (GlcNAc...) asparagine glycan.

It belongs to the multicopper oxidase family.

The catalysed reaction is 4 monapinone A + O2 = 2 dinapinone A + 2 H2O. It carries out the reaction 4 monapinone E + O2 = 2 dinapinone E + 2 H2O. Its pathway is secondary metabolite biosynthesis. Functionally, multicopper oxidase; part of the gene cluster that mediates the biosynthesis of dinapinones DPA1 (or (M)-DPA) and DPA2 (or (P)-DPA), biaryl dihydronaphthopyranones that act in concert as inhibitors of triacylglycerol accumulation in mammalian cells. The first step in the pathway corresponds to the biosynthesis of dihydroxy-decanoyl-CoA by the fungal type I fatty acid synthase (formed by ORF4 and ORF5). The cluster-specific polyketide synthase (ORF7) then accepts and extends dihydroxy-decanoyl-CoA with 6 malonyl-CoA moieties and cyclizes the molecule to produce a putative polyhydroxynaphthopyranone intermediate, which is further methylated by the cluster-specific methyltransferase (ORF1) at 7-OH to produce monapinone A (MPA). MCE catalyzes the regioselective biaryl coupling of monapinone A (MPA) at the 8,8'-positions to afford dimeric atropisomers DPA1 and DPA2 in a ratio of approximately 1:2.5. Monapinone E (MPE) also appears to be a substrate for MCE and provides the atropisomers dinapinones DPE1 (or (M)-DPE) and DPE2 (or (P)-DPE). The chain is Multicopper oxidase MCE from Talaromyces pinophilus (Penicillium pinophilum).